The chain runs to 182 residues: Large ribosomal subunit protein uL6 (182 aa).

This sequence belongs to the universal ribosomal protein uL6 family. In terms of assembly, part of the 50S ribosomal subunit.

Its function is as follows. This protein binds to the 23S rRNA, and is important in its secondary structure. It is located near the subunit interface in the base of the L7/L12 stalk, and near the tRNA binding site of the peptidyltransferase center. The chain is Large ribosomal subunit protein uL6 from Caldicellulosiruptor saccharolyticus (strain ATCC 43494 / DSM 8903 / Tp8T 6331).